Consider the following 140-residue polypeptide: Ribosomal RNA large subunit methyltransferase H (140 aa).

S-adenosyl-L-methionine-binding residues include Leu55 and Gly87.

The protein belongs to the RNA methyltransferase RlmH family. In terms of assembly, homodimer.

It localises to the cytoplasm. It carries out the reaction pseudouridine(1915) in 23S rRNA + S-adenosyl-L-methionine = N(3)-methylpseudouridine(1915) in 23S rRNA + S-adenosyl-L-homocysteine + H(+). Functionally, specifically methylates the pseudouridine at position 1915 (m3Psi1915) in 23S rRNA. This is Ribosomal RNA large subunit methyltransferase H from Rhizorhabdus wittichii (strain DSM 6014 / CCUG 31198 / JCM 15750 / NBRC 105917 / EY 4224 / RW1) (Sphingomonas wittichii).